Reading from the N-terminus, the 365-residue chain is UDP-N-acetylglucosamine--N-acetylmuramyl-(pentapeptide) pyrophosphoryl-undecaprenol N-acetylglucosamine transferase (365 aa).

Residues 11 to 13 (TGG), Asn-124, Arg-165, Ser-192, Ile-246, and Gln-291 each bind UDP-N-acetyl-alpha-D-glucosamine.

This sequence belongs to the glycosyltransferase 28 family. MurG subfamily.

It is found in the cell inner membrane. The enzyme catalyses di-trans,octa-cis-undecaprenyl diphospho-N-acetyl-alpha-D-muramoyl-L-alanyl-D-glutamyl-meso-2,6-diaminopimeloyl-D-alanyl-D-alanine + UDP-N-acetyl-alpha-D-glucosamine = di-trans,octa-cis-undecaprenyl diphospho-[N-acetyl-alpha-D-glucosaminyl-(1-&gt;4)]-N-acetyl-alpha-D-muramoyl-L-alanyl-D-glutamyl-meso-2,6-diaminopimeloyl-D-alanyl-D-alanine + UDP + H(+). Its pathway is cell wall biogenesis; peptidoglycan biosynthesis. Cell wall formation. Catalyzes the transfer of a GlcNAc subunit on undecaprenyl-pyrophosphoryl-MurNAc-pentapeptide (lipid intermediate I) to form undecaprenyl-pyrophosphoryl-MurNAc-(pentapeptide)GlcNAc (lipid intermediate II). The polypeptide is UDP-N-acetylglucosamine--N-acetylmuramyl-(pentapeptide) pyrophosphoryl-undecaprenol N-acetylglucosamine transferase (Nitratidesulfovibrio vulgaris (strain DP4) (Desulfovibrio vulgaris)).